The primary structure comprises 478 residues: MSPPLLKLGAVLSTMAMISNWMSQTLPSLVGLNTTRLSTPDTLTQISPKEGWQVYSSAQDPDGRCICTVVAPEQNLCSRDAKSRQLRQLLEKVQNMSQSIEVLNLRTQRDFQYVLKMETQMKGLKAKFRQIEDDRKTLMTKHFQELKEKMDELLPLIPVLEQYKTDAKLITQFKEEIRNLSAVLTGIQEEIGAYDYEELHQRVLSLETRLRDCMKKLTCGKLMKITGPVTVKTSGTRFGAWMTDPLASEKNNRVWYMDSYTNNKIVREYKSIADFVSGAESRTYNLPFKWAGTNHVVYNGSLYFNKYQSNIIIKYSFDMGRVLAQRSLEYAGFHNVYPYTWGGFSDIDLMADEIGLWAVYATNQNAGNIVISQLNQDTLEVMKSWSTGYPKRSAGESFMICGTLYVTNSHLTGAKVYYSYSTKTSTYEYTDIPFHNQYFHISMLDYNARDRALYAWNNGHQVLFNVTLFHIIKTEDDT.

Positions 1-23 (MSPPLLKLGAVLSTMAMISNWMS) are cleaved as a signal peptide. N-linked (GlcNAc...) asparagine glycans are attached at residues N33, N95, N179, N299, and N465. Residues 77-217 (CSRDAKSRQL…TRLRDCMKKL (141 aa)) adopt a coiled-coil conformation. The Olfactomedin-like domain maps to 218–470 (TCGKLMKITG…QVLFNVTLFH (253 aa)). A disulfide bridge connects residues C219 and C401.

As to quaternary structure, peripherally associated with AMPAR complex. AMPAR complex consists of an inner core made of 4 pore-forming GluA/GRIA proteins (GRIA1, GRIA2, GRIA3 and GRIA4) and 4 major auxiliary subunits arranged in a twofold symmetry. One of the two pairs of distinct binding sites is occupied either by CNIH2, CNIH3 or CACNG2, CACNG3. The other harbors CACNG2, CACNG3, CACNG4, CACNG8 or GSG1L. This inner core of AMPAR complex is complemented by outer core constituents binding directly to the GluA/GRIA proteins at sites distinct from the interaction sites of the inner core constituents. Outer core constituents include at least PRRT1, PRRT2, CKAMP44/SHISA9, FRRS1L and NRN1. The proteins of the inner and outer core serve as a platform for other, more peripherally associated AMPAR constituents, including OLFM3. Alone or in combination, these auxiliary subunits control the gating and pharmacology of the AMPAR complex and profoundly impact their biogenesis and protein processing. Homodimer. Interacts with MYOC. Interacts with OLFM2. In terms of tissue distribution, in the eye, expressed in trabecular meshwork and neural retina; in non-ocular tissues, expressed in brain and lung.

It localises to the secreted. It is found in the synapse. The protein is Noelin-3 (OLFM3) of Homo sapiens (Human).